The sequence spans 178 residues: Ribosome maturation factor RimM (178 aa).

The region spanning 95 to 174 (EGQHFWFNVI…IVHVKDAKDI (80 aa)) is the PRC barrel domain.

The protein belongs to the RimM family. In terms of assembly, binds ribosomal protein uS19.

It is found in the cytoplasm. Its function is as follows. An accessory protein needed during the final step in the assembly of 30S ribosomal subunit, possibly for assembly of the head region. Essential for efficient processing of 16S rRNA. May be needed both before and after RbfA during the maturation of 16S rRNA. It has affinity for free ribosomal 30S subunits but not for 70S ribosomes. This Sulfurovum sp. (strain NBC37-1) protein is Ribosome maturation factor RimM.